The following is a 681-amino-acid chain: CAI-1 autoinducer sensor kinase/phosphatase CqsS (681 aa).

4 helical membrane-spanning segments follow: residues 17 to 37 (LVGWMGFIGFPIYYIVWEFMF), 73 to 93 (AYYQVVTTLCLPCFFFYMLLM), 112 to 132 (ILLVHITSVMFVQTFVGIGLA), and 148 to 168 (MDWTHVPIFLFIYLFGNLFYF). One can recognise a Histidine kinase domain in the interval 187–413 (GIAHEMRNPL…QFTMTFPTIG (227 aa)). Position 190 is a phosphohistidine; by autocatalysis (His190). Residues 564–681 (TIMVVDDNES…RLFDKIANWI (118 aa)) enclose the Response regulatory domain. The residue at position 613 (Asp613) is a 4-aspartylphosphate.

Its subcellular location is the cell membrane. The catalysed reaction is ATP + protein L-histidine = ADP + protein N-phospho-L-histidine.. In terms of biological role, senses the quorum-sensing autoinducer CAI-1 ((S)-3-hydroxytridecan-4-one) which probably functions as an intragenus signal. The sensory signal is then relayed to LuxU and LuxO. This Vibrio campbellii (strain ATCC BAA-1116) protein is CAI-1 autoinducer sensor kinase/phosphatase CqsS (cqsS).